The chain runs to 123 residues: Crossover junction endodeoxyribonuclease Hjc (123 aa).

Glu9 lines the Mg(2+) pocket. Residue Ser29 is part of the active site. Asp33 and Glu46 together coordinate Mg(2+).

The protein belongs to the Holliday junction resolvase Hjc family. As to quaternary structure, homodimer. Probably interacts with PCNA and RadB. Requires Mg(2+) as cofactor. Mn(2+) is required as a cofactor.

It catalyses the reaction Endonucleolytic cleavage at a junction such as a reciprocal single-stranded crossover between two homologous DNA duplexes (Holliday junction).. Cleavage inhibited by RadB in the absence (but not presence) of ATP. A structure-specific endonuclease that resolves Holliday junction (HJ) intermediates during genetic recombination. Cleaves 4-way DNA junctions introducing paired nicks in opposing strands, leaving a 5'-terminal phosphate and a 3'-terminal hydroxyl group that are subsequently ligated to produce recombinant products. Cleaves both mobile and immobile junctions. Binds 4-way junction DNA, a synthetic Hj, binding is not competed by dsDNA. The sequence is that of Crossover junction endodeoxyribonuclease Hjc from Pyrococcus furiosus (strain ATCC 43587 / DSM 3638 / JCM 8422 / Vc1).